Reading from the N-terminus, the 481-residue chain is Proline--tRNA ligase (481 aa).

Belongs to the class-II aminoacyl-tRNA synthetase family. ProS type 3 subfamily. Homodimer.

It is found in the cytoplasm. It catalyses the reaction tRNA(Pro) + L-proline + ATP = L-prolyl-tRNA(Pro) + AMP + diphosphate. Its function is as follows. Catalyzes the attachment of proline to tRNA(Pro) in a two-step reaction: proline is first activated by ATP to form Pro-AMP and then transferred to the acceptor end of tRNA(Pro). The sequence is that of Proline--tRNA ligase from Pelodictyon phaeoclathratiforme (strain DSM 5477 / BU-1).